Here is a 1118-residue protein sequence, read N- to C-terminus: Error-prone DNA polymerase (1118 aa).

Residues 1071–1118 (GPQPMGYAKEVGSDRRSRPEIGNAPARQDLATLSEEAEQVMPKGRNFQ) form a disordered region.

The protein belongs to the DNA polymerase type-C family. DnaE2 subfamily.

The protein localises to the cytoplasm. The catalysed reaction is DNA(n) + a 2'-deoxyribonucleoside 5'-triphosphate = DNA(n+1) + diphosphate. In terms of biological role, DNA polymerase involved in damage-induced mutagenesis and translesion synthesis (TLS). It is not the major replicative DNA polymerase. This chain is Error-prone DNA polymerase, found in Mesorhizobium japonicum (strain LMG 29417 / CECT 9101 / MAFF 303099) (Mesorhizobium loti (strain MAFF 303099)).